The following is a 70-amino-acid chain: Large ribosomal subunit protein bL31 (70 aa).

Residues Cys-16, Cys-18, Cys-37, and Cys-40 each contribute to the Zn(2+) site.

It belongs to the bacterial ribosomal protein bL31 family. Type A subfamily. Part of the 50S ribosomal subunit. The cofactor is Zn(2+).

Its function is as follows. Binds the 23S rRNA. The polypeptide is Large ribosomal subunit protein bL31 (Colwellia psychrerythraea (strain 34H / ATCC BAA-681) (Vibrio psychroerythus)).